We begin with the raw amino-acid sequence, 138 residues long: ATP synthase epsilon chain (138 aa).

Belongs to the ATPase epsilon chain family. As to quaternary structure, F-type ATPases have 2 components, CF(1) - the catalytic core - and CF(0) - the membrane proton channel. CF(1) has five subunits: alpha(3), beta(3), gamma(1), delta(1), epsilon(1). CF(0) has three main subunits: a, b and c.

The protein localises to the cell inner membrane. Its function is as follows. Produces ATP from ADP in the presence of a proton gradient across the membrane. This is ATP synthase epsilon chain from Psychrobacter arcticus (strain DSM 17307 / VKM B-2377 / 273-4).